The following is a 196-amino-acid chain: Chromophore lyase CpcS/CpeS 2 (196 aa).

It belongs to the CpcS/CpeS biliprotein lyase family.

Covalently attaches a chromophore to Cys residue(s) of phycobiliproteins. In Trichodesmium erythraeum (strain IMS101), this protein is Chromophore lyase CpcS/CpeS 2.